A 618-amino-acid polypeptide reads, in one-letter code: MQFDDFANHVITIEAESADLEITSLVSKLLTTAGNMDDKTLSTVVRFIKGTVFPAWSSQTLDIGPALLHTTIAQAAGPNVDSADVENRLAEYGEIGAVAASYDLNGQQGLSAFTPSTPDSLTVGHVDKTLRAVASASGDGSESRRRNLLFGLFSQASSSEARVLARLILGEMRIGVGTGTVRDAIISGFIEPAADADKKTLESREDAKSVPPASQPEITNKISGDTSPNTSESVQTKKSDPDTSSNVDPSAVVERALQVSNDYGMVATIARNQGQAGLIDISLELGRPIQAMLAQAADGVDAVDTWDAVAIETKFDGARVQIHTDGESVSLYSRNMEDVTDPLPEIVEFISQKVTVPAILDAEVVAVSDDGDPLAFQEVLRRFRRKYDIDAMRESVNLNVYVFDCLHIDDADLLDIPLRERREKLRELFNTTDALSPFQLTTDPNVIAQARSKALSNGHEGVMLKDPDSTYNPGSRGQHWLKHKPDVETLDLVVTGAEWGEGRRANVFGTFVVSARTTADEQQFNSLGKVATGLTDDQLTTLTEQLRPHVRSEDGQTVMIEPAIVVEVGYEEIQRSPTYDSGFALRFPRVVGIRHDKAISDVDSLSRIKHLTTGESPD.

A compositionally biased stretch (basic and acidic residues) spans 197–208 (DKKTLESREDAK). The interval 197-250 (DKKTLESREDAKSVPPASQPEITNKISGDTSPNTSESVQTKKSDPDTSSNVDPS) is disordered. Residues 216–234 (PEITNKISGDTSPNTSESV) are compositionally biased toward polar residues. E312 contacts ATP. The active-site N6-AMP-lysine intermediate is the K314. R319, R334, E363, F403, R476, and K482 together coordinate ATP. The disordered stretch occupies residues 459–480 (HEGVMLKDPDSTYNPGSRGQHW).

It belongs to the ATP-dependent DNA ligase family. It depends on Mg(2+) as a cofactor.

It catalyses the reaction ATP + (deoxyribonucleotide)n-3'-hydroxyl + 5'-phospho-(deoxyribonucleotide)m = (deoxyribonucleotide)n+m + AMP + diphosphate.. In terms of biological role, DNA ligase that seals nicks in double-stranded DNA during DNA replication, DNA recombination and DNA repair. This Haloquadratum walsbyi (strain DSM 16790 / HBSQ001) protein is DNA ligase 2.